The following is a 446-amino-acid chain: D(3) dopamine receptor (446 aa).

Topologically, residues Met1–Tyr32 are extracellular. Residues Asn12 and Asn19 are each glycosylated (N-linked (GlcNAc...) asparagine). Residues Ala33–Leu55 traverse the membrane as a helical segment. The Cytoplasmic portion of the chain corresponds to Arg56–Asn65. A helical membrane pass occupies residues Tyr66–Tyr88. At Leu89–Asp104 the chain is on the extracellular side. N-linked (GlcNAc...) asparagine glycosylation occurs at Asn97. Cys103 and Cys181 are disulfide-bonded. Residues Val105 to Ile126 form a helical membrane-spanning segment. Over Asp127–Arg149 the chain is Cytoplasmic. The helical transmembrane segment at Val150 to Phe170 threads the bilayer. The Extracellular portion of the chain corresponds to Gly171 to Asp187. Asn173 carries an N-linked (GlcNAc...) asparagine glycan. The chain crosses the membrane as a helical span at residues Phe188–Ala209. At Arg210–Gln375 the chain is on the cytoplasmic side. A helical membrane pass occupies residues Met376–Leu397. Topologically, residues Asn398 to Arg412 are extracellular. Cys401 and Cys404 are oxidised to a cystine. Residues Ala413–Phe432 form a helical membrane-spanning segment. At Asn433–Cys446 the chain is on the cytoplasmic side.

Belongs to the G-protein coupled receptor 1 family. In terms of assembly, interacts with CLIC6. Interacts with GRK4. Interacts with PALM. Interacts with FLNA (via filamin repeat 21); increases PKA-mediated phosphorylation of FLNA. Post-translationally, phosphorylated by GRK4. Palmitoylated.

The protein resides in the cell membrane. Its function is as follows. Dopamine receptor whose activity is mediated by G proteins which inhibit adenylyl cyclase. Promotes cell proliferation. The sequence is that of D(3) dopamine receptor (Drd3) from Mus musculus (Mouse).